The chain runs to 299 residues: Release factor glutamine methyltransferase (299 aa).

S-adenosyl-L-methionine is bound by residues 134–138 (GTGSG), Asp-157, Trp-186, and Asn-203. 203–206 (NPPY) provides a ligand contact to substrate.

The protein belongs to the protein N5-glutamine methyltransferase family. PrmC subfamily.

The catalysed reaction is L-glutaminyl-[peptide chain release factor] + S-adenosyl-L-methionine = N(5)-methyl-L-glutaminyl-[peptide chain release factor] + S-adenosyl-L-homocysteine + H(+). Methylates the class 1 translation termination release factors RF1/PrfA and RF2/PrfB on the glutamine residue of the universally conserved GGQ motif. The sequence is that of Release factor glutamine methyltransferase from Synechocystis sp. (strain ATCC 27184 / PCC 6803 / Kazusa).